The primary structure comprises 209 residues: Response regulator protein VraR (209 aa).

The Response regulatory domain occupies 4-120 (KVLFVDDHEM…DIADAVRKTY (117 aa)). Position 55 is a 4-aspartylphosphate (aspartate 55). The 66-residue stretch at 141 to 206 (RAELYEMLTE…QAVIYAFQHN (66 aa)) folds into the HTH luxR-type domain. A DNA-binding region (H-T-H motif) is located at residues 165 to 184 (NQEIASASHITIKTVKTHVS).

In terms of processing, phosphorylated by VraS.

Its subcellular location is the cytoplasm. Its function is as follows. Member of the two-component regulatory system VraS/VraR involved in the control of the cell wall peptidoglycan biosynthesis. This Staphylococcus epidermidis (strain ATCC 35984 / DSM 28319 / BCRC 17069 / CCUG 31568 / BM 3577 / RP62A) protein is Response regulator protein VraR (vraR).